The following is a 212-amino-acid chain: Deoxyribose-phosphate aldolase (212 aa).

The active-site Proton donor/acceptor is D89. The Schiff-base intermediate with acetaldehyde role is filled by K151. K180 functions as the Proton donor/acceptor in the catalytic mechanism.

It belongs to the DeoC/FbaB aldolase family. DeoC type 1 subfamily.

The protein localises to the cytoplasm. It carries out the reaction 2-deoxy-D-ribose 5-phosphate = D-glyceraldehyde 3-phosphate + acetaldehyde. The protein operates within carbohydrate degradation; 2-deoxy-D-ribose 1-phosphate degradation; D-glyceraldehyde 3-phosphate and acetaldehyde from 2-deoxy-alpha-D-ribose 1-phosphate: step 2/2. In terms of biological role, catalyzes a reversible aldol reaction between acetaldehyde and D-glyceraldehyde 3-phosphate to generate 2-deoxy-D-ribose 5-phosphate. This Clostridium botulinum (strain Kyoto / Type A2) protein is Deoxyribose-phosphate aldolase.